Reading from the N-terminus, the 95-residue chain is Small integral membrane protein 26 (95 aa).

Residues 13 to 35 (MSVVYGIGTWSVLGSLLYYSRTM) traverse the membrane as a helical segment.

This sequence belongs to the SMIM26 family. In terms of assembly, interacts with AGK and SLC25A11. In terms of tissue distribution, detected in kidney (at protein level).

Its subcellular location is the mitochondrion outer membrane. May play a role in cell viability. The chain is Small integral membrane protein 26 from Homo sapiens (Human).